The following is a 179-amino-acid chain: Ribosome maturation factor RimM (179 aa).

The region spanning 100–176 (HGEYHLTELI…FILLTPPSGL (77 aa)) is the PRC barrel domain.

The protein belongs to the RimM family. As to quaternary structure, binds ribosomal protein uS19.

It is found in the cytoplasm. Functionally, an accessory protein needed during the final step in the assembly of 30S ribosomal subunit, possibly for assembly of the head region. Essential for efficient processing of 16S rRNA. May be needed both before and after RbfA during the maturation of 16S rRNA. It has affinity for free ribosomal 30S subunits but not for 70S ribosomes. The protein is Ribosome maturation factor RimM of Prochlorococcus marinus subsp. pastoris (strain CCMP1986 / NIES-2087 / MED4).